We begin with the raw amino-acid sequence, 288 residues long: MSEDEFFGGDNEAVWNGSRFSDSPEFQTLKEEVAAELFEINGQISTLQQFTATLKSFIDRGDVSAKVVERINKRSVAKIEEIGGLIKKVNTSVKKMDAIEEASLDKTQIIAREKLVRDVSYSFQEFQGIQRQFTQVMKQVNERAKESLEASEMANDAALLDEEQRQNSSKSTRIPGSQIVIERDPINNEEFAYQQNLIEQRDQEISNIERGITELNEVFKDLGSVVQQQGVLVDNIEANIYTTSDNTQLASDELRKAMRYQKRTSRWRVYLLIVLLVMLLFIFLIMKL.

At 1 to 268 (MSEDEFFGGD…RYQKRTSRWR (268 aa)) the chain is on the cytoplasmic side. Ser-2 and Ser-23 each carry phosphoserine. Residues 195-257 (QNLIEQRDQE…QLASDELRKA (63 aa)) form the t-SNARE coiled-coil homology domain. Residues 269–288 (VYLLIVLLVMLLFIFLIMKL) form a helical; Anchor for type IV membrane protein membrane-spanning segment.

It belongs to the syntaxin family. In terms of processing, ubiquitinated.

It is found in the membrane. Functionally, plays a role in the sorting and targeting of vacuolar proteases. The protein is Syntaxin PEP12 (PEP12) of Saccharomyces cerevisiae (strain ATCC 204508 / S288c) (Baker's yeast).